We begin with the raw amino-acid sequence, 364 residues long: DNA replication and repair protein RecF (364 aa).

Position 30–37 (30–37 (GANGSGKT)) interacts with ATP.

It belongs to the RecF family.

Its subcellular location is the cytoplasm. Functionally, the RecF protein is involved in DNA metabolism; it is required for DNA replication and normal SOS inducibility. RecF binds preferentially to single-stranded, linear DNA. It also seems to bind ATP. In Sodalis glossinidius, this protein is DNA replication and repair protein RecF.